The primary structure comprises 73 residues: uncharacterized protein (73 aa).

The segment at 1-32 (MFLSSAVRKDSNGVRHLPSVQRWTPGSPPTRA) is disordered.

This is an uncharacterized protein from Frog virus 3 (isolate Goorha) (FV-3).